Consider the following 165-residue polypeptide: uncharacterized protein (165 aa).

Residues 20–40 (INLIASIVLWLLFVITVIGTF) form a helical membrane-spanning segment. A glycan (N-linked (GlcNAc...) asparagine; by host) is linked at Asn51. A helical transmembrane segment spans residues 97-117 (VGIIVILIFMLMIIMNGFYQM).

Its subcellular location is the membrane. This is an uncharacterized protein from Acanthamoeba polyphaga (Amoeba).